The following is a 149-amino-acid chain: Stem-specific protein TSJT1 (149 aa).

In terms of tissue distribution, stem-specific (active at lower levels in other organs).

The chain is Stem-specific protein TSJT1 (TSJT1) from Nicotiana tabacum (Common tobacco).